A 1032-amino-acid polypeptide reads, in one-letter code: MLQQPTISRFFKSSSTRKKSEQRTAKEEAELMQLLESDGENNSATVPSDRKPEAAPMHVGLGNKAAAGGAVPGQVKSATRGFEDFRFNRRREACGKEQEVGFAERLQRIMERREGGCVEEDETELDNEAPRSKRAKPNRLTELDQQFKDLKLQHMDKVLAVRVGYKYKFFAEDAVMVSRVLQIKLVPGKLTVHETDPADHKHKKFAYCTIPDTRLEVHLQRLMHHNLKVGVVEQTETSAVKKNSGTSSSVFSREVTNIFTRATYGINETFGTKDRRVLGDSASVWGLVCKRQPSYTRYFLVSVNLNSGEVIFDDFKEERFLTEALETRIKYTNPSEVVVGDGLGSEIEKVFHTSDSDITLNRIELVGLYEEIFSEPHPAFKGNVPLQTALMLVHGYLTNFKNESLLFFKENFKPFCSKTHMILPSSAIESLDIFENSTDRSSKGSLLWVLDHTRTNYGLRNLKNWIAKPLINIDQIQQRLDAVQCISTEVGNIFIESLNNMLRDGQDLERILNRIAYGKTSRREVYLFLRELTQLATLFSSHHRYIETNVLSANGKIRMQSSLLANIFTDLDEYWKQFPIPNFLAMINIDAALDKNPDRPYVEYFNLTKYDRAEPLISKQQDIEAVIGELRDELKNIRVILKRPMLNYKDEIDFLVEIRNTQVSSVPVDWVKVASTKAVSRFQTPGTAKLVAKLQYHKELLQDLALQEYESFIKRITGEYTSLRKAILHLSTYDCILSLAATSCNVDYVRPKFNTAPQCINVINGRNPIIESLDVRYMPNDVNLNREGKKIMIITGPNMGGKSSYIRQVALLVIMAQIGCYVPAQEAEFSIFDQIFTRIGAYDNLLRNDSTFKIEMTEMVQILRSSTENSLLLLDEVGRGTGTHDGISISYALLRYFIELHNACPLILFITHYASLGSIRSPILGNYHMSYIEEKRPGENWPSVVFLYKLKEGRAHNSYGLNVAKLADIQTGIINRAYKISTMLKQEMESNSSIAAICTIKHALAGNSAASLKSAIETLIESADHEQFVLNM.

The segment at 1-59 (MLQQPTISRFFKSSSTRKKSEQRTAKEEAELMQLLESDGENNSATVPSDRKPEAAPMHV) is disordered. A compositionally biased stretch (basic and acidic residues) spans 18–29 (KKSEQRTAKEEA). Residues 136 to 262 (KPNRLTELDQ…REVTNIFTRA (127 aa)) are mispair-binding domain. 796 to 803 (GPNMGGKS) serves as a coordination point for ATP.

Belongs to the DNA mismatch repair MutS family. MSH3 subfamily. As to quaternary structure, heterodimer consisting of MSH2-MSH3 (MutS beta). Forms a ternary complex with MutL alpha (MLH1-PMS1).

It is found in the nucleus. In terms of biological role, component of the post-replicative DNA mismatch repair system (MMR). Heterodimerizes with MSH2 to form MutS beta, which binds to DNA mismatches thereby initiating DNA repair. MSH3 provides substrate-binding and substrate specificity to the complex. When bound, the MutS beta heterodimer bends the DNA helix and shields approximately 20 base pairs. Acts mainly to repair insertion-deletion loops (IDLs) from 2 to 13 nucleotides in size, but can also repair base-base and single insertion-deletion mismatches that occur during replication. After mismatch binding, forms a ternary complex with the MutL alpha heterodimer, which is thought to be responsible for directing the downstream MMR events, including strand discrimination, excision, and resynthesis. ATP binding and hydrolysis play a pivotal role in mismatch repair functions. This is DNA mismatch repair protein MSH3 (MSH3) from Eremothecium gossypii (strain ATCC 10895 / CBS 109.51 / FGSC 9923 / NRRL Y-1056) (Yeast).